The chain runs to 218 residues: Adenylate kinase (218 aa).

Residue 11–16 (GAGKGT) coordinates ATP. The interval 31–60 (STGDMFREAMANKTKVGLEAKSYIDKGNLV) is NMP. Residues Thr-32, Arg-37, 58–60 (NLV), 86–89 (GFPR), and Gln-93 each bind AMP. Residues 127-165 (ARYMCKNCGATYNKLSKQPKVEGTCDRCGSHEFYQREDD) are LID. Arg-128 contacts ATP. Residues Cys-131 and Cys-134 each contribute to the Zn(2+) site. Residue 137–138 (TY) participates in ATP binding. Zn(2+) contacts are provided by Cys-151 and Cys-154. Arg-162 and Arg-173 together coordinate AMP. Gln-201 is a binding site for ATP.

This sequence belongs to the adenylate kinase family. As to quaternary structure, monomer.

The protein localises to the cytoplasm. The catalysed reaction is AMP + ATP = 2 ADP. It participates in purine metabolism; AMP biosynthesis via salvage pathway; AMP from ADP: step 1/1. Functionally, catalyzes the reversible transfer of the terminal phosphate group between ATP and AMP. Plays an important role in cellular energy homeostasis and in adenine nucleotide metabolism. The chain is Adenylate kinase from Lactobacillus helveticus (strain DPC 4571).